Consider the following 736-residue polypeptide: Protein DSF2 (736 aa).

Over residues 1–10 (MNQNLKNTSW) the composition is skewed to polar residues. 4 disordered regions span residues 1 to 46 (MNQN…DSQF), 178 to 208 (SGMK…SPNP), 229 to 410 (ISDN…SGEN), and 440 to 461 (FKTA…ARPN). Over residues 14-24 (IGSDDQERKAN) the composition is skewed to basic and acidic residues. Polar residues-rich tracts occupy residues 25–46 (SSEV…DSQF) and 197–208 (ENGNRSTNSPNP). Low complexity predominate over residues 238-256 (NNANSKNNRTTSNNINTST). Positions 264 to 284 (KQSCPNEFTTTQKSNCLYRNG) are enriched in polar residues. 3 stretches are compositionally biased toward low complexity: residues 285-294 (SSTSTNTSFS), 303-318 (KTQS…FSKL), and 335-350 (SNSS…TMTN). Basic residues predominate over residues 374–385 (KLFKSPRTRAKN). The segment covering 392–410 (EGSSPIRSATNSLDFSGEN) has biased composition (polar residues).

This chain is Protein DSF2 (DSF2), found in Saccharomyces cerevisiae (strain ATCC 204508 / S288c) (Baker's yeast).